The sequence spans 235 residues: Ribonuclease 3 (235 aa).

Residues 8–137 enclose the RNase III domain; sequence PAELARRIGI…VIGAIFLSGG (130 aa). E50 contacts Mg(2+). D54 is a catalytic residue. D123 and E126 together coordinate Mg(2+). E126 is an active-site residue. The DRBM domain maps to 163–232; that stretch reads DNKTAFQEWV…AGRAMREWAG (70 aa). A disordered region spans residues 211 to 235; the sequence is QGRTKKEAEQQAAGRAMREWAGRKG. A compositionally biased stretch (basic and acidic residues) spans 226 to 235; the sequence is AMREWAGRKG.

The protein belongs to the ribonuclease III family. In terms of assembly, homodimer. Mg(2+) is required as a cofactor.

It is found in the cytoplasm. It catalyses the reaction Endonucleolytic cleavage to 5'-phosphomonoester.. Functionally, digests double-stranded RNA. Involved in the processing of primary rRNA transcript to yield the immediate precursors to the large and small rRNAs (23S and 16S). Processes some mRNAs, and tRNAs when they are encoded in the rRNA operon. Processes pre-crRNA and tracrRNA of type II CRISPR loci if present in the organism. The protein is Ribonuclease 3 of Heliobacterium modesticaldum (strain ATCC 51547 / Ice1).